The chain runs to 352 residues: GTPase Obg (352 aa).

In terms of domain architecture, Obg spans 1–159 (MQFIDQAEIQ…RMLRLELKLL (159 aa)). Positions 160–330 (AEVGIIGLPN…LMQEIWGLLE (171 aa)) constitute an OBG-type G domain. Residues 166-173 (GLPNAGKS), 191-195 (FTTLV), 213-216 (DIPG), 280-283 (NKVD), and 311-313 (SAV) contribute to the GTP site. Positions 173 and 193 each coordinate Mg(2+).

Belongs to the TRAFAC class OBG-HflX-like GTPase superfamily. OBG GTPase family. As to quaternary structure, monomer. Mg(2+) is required as a cofactor.

Its subcellular location is the cytoplasm. Functionally, an essential GTPase which binds GTP, GDP and possibly (p)ppGpp with moderate affinity, with high nucleotide exchange rates and a fairly low GTP hydrolysis rate. Plays a role in control of the cell cycle, stress response, ribosome biogenesis and in those bacteria that undergo differentiation, in morphogenesis control. The sequence is that of GTPase Obg from Trichodesmium erythraeum (strain IMS101).